The following is a 351-amino-acid chain: Prostaglandin reductase 2 (351 aa).

Residue 99-100 participates in substrate binding; that stretch reads FY. NADP(+)-binding positions include 165 to 168, K192, Y208, N231, 253 to 259, 287 to 289, and N337; these read GACG, CGQISQY, and FLV. 288 to 290 is a substrate binding site; it reads LVL.

Belongs to the NADP-dependent oxidoreductase L4BD family. As to quaternary structure, monomer. As to expression, widely expressed.

The protein resides in the cytoplasm. It catalyses the reaction 13,14-dihydro-15-oxo-prostaglandin E2 + NAD(+) = 15-oxoprostaglandin E2 + NADH + H(+). The catalysed reaction is 13,14-dihydro-15-oxo-prostaglandin E2 + NADP(+) = 15-oxoprostaglandin E2 + NADPH + H(+). It carries out the reaction 13,14-dihydro-15-oxo-PGF2alpha + NADP(+) = 15-oxoprostaglandin F2alpha + NADPH + H(+). The enzyme catalyses 13,14-dihydro-15-oxo-prostaglandin E1 + NADP(+) = 15-oxoprostaglandin E1 + NADPH + H(+). It catalyses the reaction 13,14-dihydro-15-oxo-prostaglandin F1alpha + NADP(+) = 15-oxoprostaglandin F1alpha + NADPH + H(+). Functions as 15-oxo-prostaglandin 13-reductase and acts on 15-keto-PGE1, 15-keto-PGE2, 15-keto-PGE1-alpha and 15-keto-PGE2-alpha with highest activity towards 15-keto-PGE2. Overexpression represses transcriptional activity of PPARG and inhibits adipocyte differentiation. This Homo sapiens (Human) protein is Prostaglandin reductase 2.